We begin with the raw amino-acid sequence, 470 residues long: FAD-dependent monooxygenase SAT7 (470 aa).

Residues 28–48 (GLSVAIVGGGIVGIALALGLV) form a helical membrane-spanning segment. Positions 58, 71, and 143 each coordinate FAD. Active-site residues include R227 and Y260. FAD-binding residues include D351 and A364.

The protein belongs to the paxM FAD-dependent monooxygenase family. FAD serves as cofactor.

It localises to the membrane. The protein operates within mycotoxin biosynthesis. Its function is as follows. FAD-dependent monooxygenase; part of the satratoxin SC1 cluster involved in the biosynthesis of satratoxins, trichothecene mycotoxins that are associated with human food poisonings. Satratoxins are suggested to be made by products of multiple gene clusters (SC1, SC2 and SC3) that encode 21 proteins in all, including polyketide synthases, acetyltransferases, and other enzymes expected to modify the trichothecene skeleton. SC1 encodes 10 proteins, SAT1 to SAT10. The largest are SAT8, which encodes a putative polyketide synthase (PKS) with a conventional non-reducing architecture, and SAT10, a putative protein containing four ankyrin repeats and thus may be involved in protein scaffolding. The putative short-chain reductase SAT3 may assist the PKS in some capacity. SAT6 contains a secretory lipase domain and acts probably as a trichothecene esterase. SAT5 encodes a putative acetyltransferase, and so, with SAT6, may affect endogenous protection from toxicity. The probable transcription factor SAT9 may regulate the expression of the SC1 cluster. SC2 encodes proteins SAT11 to SAT16, the largest of which encodes the putative reducing PKS SAT13. SAT11 is a cytochrome P450 monooxygenase, while SAT14 and SAT16 are probable acetyltransferases. The SC2 cluster may be regulated by the transcription factor SAT15. SC3 is a small cluster that encodes 5 proteins, SAT17 to SAT21. SAT21 is a putative MFS-type transporter which may have a role in exporting secondary metabolites. The four other proteins putatively encoded in SC3 include the taurine hydroxylase-like protein SAT17, the O-methyltransferase SAT18, the acetyltransferase SAT19, and the Cys6-type zinc finger SAT20, the latter being probably involved in regulation of SC3 expression. The chain is FAD-dependent monooxygenase SAT7 from Stachybotrys chartarum (strain CBS 109288 / IBT 7711) (Toxic black mold).